Reading from the N-terminus, the 113-residue chain is Neocarzinostatin (113 aa).

2 disulfides stabilise this stretch: Cys37–Cys47 and Cys88–Cys93.

This sequence belongs to the neocarzinostatin family.

Functionally, NCS has antibiotic activity (for Gram-positive bacteria) and antitumor activity (for certain mouse tumors). NCS binds non-covalently to a chromophore which is the cytotoxic and mutagenic component of the antibiotic. The chromophore binds to DNA as a weak intercalator and causes single- and double-strand breaks. This is Neocarzinostatin (ncsA) from Streptomyces malayensis.